A 298-amino-acid polypeptide reads, in one-letter code: Protein OS-9 homolog (298 aa).

An N-terminal signal peptide occupies residues 1–25 (MGLAGGARVVLFVVAAAAAAALTAA). Asparagine 95 carries an N-linked (GlcNAc...) asparagine glycan. The 126-residue stretch at 121 to 246 (DQCFYRHEGW…TVQSPMLCKN (126 aa)) folds into the MRH domain. Cysteines 123 and 136 form a disulfide. Residues tryptophan 130, tryptophan 131, and glutamine 143 each contribute to the a mannooligosaccharide derivative site. N-linked (GlcNAc...) asparagine glycosylation is found at asparagine 171 and asparagine 197. Intrachain disulfides connect cysteine 201–cysteine 232 and cysteine 216–cysteine 244. 4 residues coordinate a mannooligosaccharide derivative: aspartate 202, arginine 208, glutamate 228, and tyrosine 234.

The protein belongs to the OS-9 family. As to quaternary structure, interacts with HRD3.

Its subcellular location is the endoplasmic reticulum. In terms of biological role, lectin which functions in endoplasmic reticulum (ER) quality control and ER-associated degradation (ERAD). May bind terminally misfolded non-glycosylated proteins as well as improperly folded glycoproteins, retain them in the ER, and possibly transfer them to the ubiquitination machinery and promote their degradation. This chain is Protein OS-9 homolog, found in Oryza sativa subsp. japonica (Rice).